The primary structure comprises 217 residues: UPF0711 protein C18orf21 homolog (217 aa).

S126 is modified (phosphoserine). Phosphothreonine is present on residues T130 and T139. The tract at residues 131 to 190 is disordered; that stretch reads AANKASPKTPKRTAPGSANLGQSTNGSKGKSPSLTIRTPTSGQSTPICSSRNGSKRKKHF. The span at 149-182 shows a compositional bias: polar residues; it reads NLGQSTNGSKGKSPSLTIRTPTSGQSTPICSSRN.

Belongs to the UPF0711 family.

This is UPF0711 protein C18orf21 homolog from Mus musculus (Mouse).